The primary structure comprises 285 residues: Elongation factor Ts (285 aa).

The interval 75 to 78 (TDFV) is involved in Mg(2+) ion dislocation from EF-Tu.

Belongs to the EF-Ts family.

It is found in the cytoplasm. Associates with the EF-Tu.GDP complex and induces the exchange of GDP to GTP. It remains bound to the aminoacyl-tRNA.EF-Tu.GTP complex up to the GTP hydrolysis stage on the ribosome. In Alcanivorax borkumensis (strain ATCC 700651 / DSM 11573 / NCIMB 13689 / SK2), this protein is Elongation factor Ts.